Here is a 451-residue protein sequence, read N- to C-terminus: MRECISVHIGQAGIQIGNACWELYCLEHGIQPNGQMPSDKTVGGGDDAFNTFFSETGAGKHVPRAIFVDLEPTVIDEVRTGTYRQLFHPEQLISGKEDAANNFARGHYTIGKEIVDLCLDRIRKLADNCTGLQGFLVFNAVGGGTGSGLGSLLLERLSVDYGKKSKLGFTVYPSPQISTSVVEPYNSVLSTHSLLEHTDVSVLLDNEAIYDICKRSLDIERPTYTNLNRLVSQVISSLTASLRFDGALNVDVTEFQTNLVPYPRIHFMLSSYAPVISAEKAYHEQLSVAEITNSAFEPSSMMAKCDPRHGKYMACCLMYRGDVVPKDVNAAVGTIKTKRTIQFVDWCPTGFKCGINYQAPTVVPGGDLAKVQRAVCMISNSTSVAEVFSRIDTKFDLMYSKRAFVHWYVGEGMEEGEFSEAREDLAALEKDYEEVGAESAEGDDEDEGEDY.

A GTP-binding site is contributed by Q11. The residue at position 40 (K40) is an N6-acetyllysine. Positions 71, 144, 145, 179, 206, and 228 each coordinate GTP. E71 is a Mg(2+) binding site. The active site involves E254. Residues 432–451 (YEEVGAESAEGDDEDEGEDY) are disordered.

This sequence belongs to the tubulin family. As to quaternary structure, dimer of alpha and beta chains. A typical microtubule is a hollow water-filled tube with an outer diameter of 25 nm and an inner diameter of 15 nM. Alpha-beta heterodimers associate head-to-tail to form protofilaments running lengthwise along the microtubule wall with the beta-tubulin subunit facing the microtubule plus end conferring a structural polarity. Microtubules usually have 13 protofilaments but different protofilament numbers can be found in some organisms and specialized cells. Mg(2+) is required as a cofactor. Undergoes a tyrosination/detyrosination cycle, the cyclic removal and re-addition of a C-terminal tyrosine residue by the enzymes tubulin tyrosine carboxypeptidase (TTCP) and tubulin tyrosine ligase (TTL), respectively. In terms of processing, acetylation of alpha chains at Lys-40 stabilizes microtubules and affects affinity and processivity of microtubule motors. This modification has a role in multiple cellular functions, ranging from cell motility, cell cycle progression or cell differentiation to intracellular trafficking and signaling.

It is found in the cytoplasm. The protein resides in the cytoskeleton. The catalysed reaction is GTP + H2O = GDP + phosphate + H(+). Its function is as follows. Tubulin is the major constituent of microtubules, a cylinder consisting of laterally associated linear protofilaments composed of alpha- and beta-tubulin heterodimers. Microtubules grow by the addition of GTP-tubulin dimers to the microtubule end, where a stabilizing cap forms. Below the cap, tubulin dimers are in GDP-bound state, owing to GTPase activity of alpha-tubulin. This chain is Tubulin alpha chain (TBA), found in Daucus carota (Wild carrot).